A 498-amino-acid polypeptide reads, in one-letter code: Glycerol kinase (498 aa).

Thr-12 serves as a coordination point for ADP. Residues Thr-12, Thr-13, and Ser-14 each contribute to the ATP site. Residue Thr-12 participates in sn-glycerol 3-phosphate binding. Arg-16 lines the ADP pocket. The sn-glycerol 3-phosphate site is built by Arg-82, Glu-83, and Tyr-134. Glycerol-binding residues include Arg-82, Glu-83, and Tyr-134. The residue at position 230 (His-230) is a Phosphohistidine; by HPr. Asp-244 contributes to the sn-glycerol 3-phosphate binding site. Positions 244 and 245 each coordinate glycerol. ADP is bound by residues Thr-266, Gly-309, Gln-313, Gly-410, and Asn-414. The ATP site is built by Thr-266, Gly-309, Gln-313, and Gly-410.

The protein belongs to the FGGY kinase family. Homotetramer and homodimer (in equilibrium). Post-translationally, the phosphoenolpyruvate-dependent sugar phosphotransferase system (PTS), including enzyme I, and histidine-containing protein (HPr) are required for the phosphorylation, which leads to the activation of the enzyme.

It catalyses the reaction glycerol + ATP = sn-glycerol 3-phosphate + ADP + H(+). It functions in the pathway polyol metabolism; glycerol degradation via glycerol kinase pathway; sn-glycerol 3-phosphate from glycerol: step 1/1. Activated by phosphorylation and inhibited by fructose 1,6-bisphosphate (FBP). In terms of biological role, key enzyme in the regulation of glycerol uptake and metabolism. Catalyzes the phosphorylation of glycerol to yield sn-glycerol 3-phosphate. This chain is Glycerol kinase, found in Staphylococcus aureus (strain COL).